The primary structure comprises 420 residues: Methionine aminopeptidase 2 (420 aa).

Residues 1-48 are disordered; it reads MSDAIAKDAVNTSSEKEPVSATPELKTSGSPDAAVSSGDKKKKKKKKK. Histidine 172 lines the substrate pocket. Positions 192, 203, and 272 each coordinate a divalent metal cation. Histidine 280 provides a ligand contact to substrate. A divalent metal cation-binding residues include glutamate 305 and glutamate 401.

The protein belongs to the peptidase M24A family. Methionine aminopeptidase eukaryotic type 2 subfamily. It depends on Co(2+) as a cofactor. Zn(2+) is required as a cofactor. The cofactor is Mn(2+). Fe(2+) serves as cofactor.

Its subcellular location is the cytoplasm. It carries out the reaction Release of N-terminal amino acids, preferentially methionine, from peptides and arylamides.. Cotranslationally removes the N-terminal methionine from nascent proteins. The N-terminal methionine is often cleaved when the second residue in the primary sequence is small and uncharged (Met-Ala-, Cys, Gly, Pro, Ser, Thr, or Val). In Lachancea thermotolerans (strain ATCC 56472 / CBS 6340 / NRRL Y-8284) (Yeast), this protein is Methionine aminopeptidase 2.